The sequence spans 360 residues: MEPRDLSAHTVYRAGRGIEEVARELGLDPDDMVKLASNENMFGPSPDAVEAIRGSAERMHSYPKASHADLVDELADMWDVTPEQVWLSNGGDGALDCLARAMLDPGQDVLVPSPGFAYYAMSARYHHGEVNEYTLSKADDFAQTADTVLKDYDGERIVYLTSPHNPTGAEFTTDAVRTIAEETDEQTLVVVDEAYGEFTEKPSKRPLLSDRDDVALLRTFSKAYGLAGIRLGYAVVPEDWADAYARINTPFSASELACRAGLAALDDDEHVERSVDTAAWAREYLSAELDAPTWDSAGNFILAEVGDASAIADAAQERGVIIRDCSSFGLPECIRITCGTREDTERAVSVLNEVIEEVKA.

At lysine 222 the chain carries N6-(pyridoxal phosphate)lysine.

It belongs to the class-II pyridoxal-phosphate-dependent aminotransferase family. Histidinol-phosphate aminotransferase subfamily. The cofactor is pyridoxal 5'-phosphate.

It carries out the reaction L-histidinol phosphate + 2-oxoglutarate = 3-(imidazol-4-yl)-2-oxopropyl phosphate + L-glutamate. Its pathway is amino-acid biosynthesis; L-histidine biosynthesis; L-histidine from 5-phospho-alpha-D-ribose 1-diphosphate: step 7/9. This Haloarcula marismortui (strain ATCC 43049 / DSM 3752 / JCM 8966 / VKM B-1809) (Halobacterium marismortui) protein is Histidinol-phosphate aminotransferase.